The following is a 61-amino-acid chain: MSIVQSYITDEKGNIKGVILDYKTFKKIEELLLDYGLLKAMEEVENEEEIDLETAKKLLEQ.

Functionally, antitoxin component of a type II toxin-antitoxin (TA) system. Its cognate toxin is RelE2 (Potential). This chain is Putative antitoxin RelB2 (relB2), found in Methanocaldococcus jannaschii (strain ATCC 43067 / DSM 2661 / JAL-1 / JCM 10045 / NBRC 100440) (Methanococcus jannaschii).